A 189-amino-acid polypeptide reads, in one-letter code: Photosystem I assembly protein Ycf4 (189 aa).

2 consecutive transmembrane segments (helical) span residues 25–45 (SVYFWAVALTGGGLGFTLAGL) and 62–82 (LVFIPQGIAMLFYGVLGSLAG).

The protein belongs to the Ycf4 family.

Its subcellular location is the cellular thylakoid membrane. Seems to be required for the assembly of the photosystem I complex. This chain is Photosystem I assembly protein Ycf4, found in Synechococcus sp. (strain JA-2-3B'a(2-13)) (Cyanobacteria bacterium Yellowstone B-Prime).